The following is a 787-amino-acid chain: Integrin beta-3 (787 aa).

Residues 1-25 (MRAQWPGQLWAALLALGALAGVVVG) form the signal peptide. Residues 26–717 (ESNICTTRGV…EEPECPKGPD (692 aa)) are Extracellular-facing. The PSI domain maps to 29 to 75 (ICTTRGVNSCQQCLAVSPVCAWCSDETLSQGSPRCNLKENLLKDNCA). 19 disulfide bridges follow: Cys30/Cys48, Cys38/Cys460, Cys41/Cys63, Cys51/Cys74, Cys202/Cys209, Cys257/Cys298, Cys399/Cys411, Cys431/Cys458, Cys462/Cys482, Cys473/Cys485, Cys487/Cys496, Cys498/Cys528, Cys511/Cys526, Cys520/Cys531, Cys533/Cys546, Cys548/Cys569, Cys553/Cys567, Cys561/Cys572, and Cys574/Cys583. The 243-residue stretch at 134–376 (DYPVDIYYLM…QLIVDAYGKI (243 aa)) folds into the VWFA domain. The Mg(2+) site is built by Ser146 and Ser148. Residues Ser148, Asp151, Asp152, and Asp183 each coordinate Ca(2+). Positions 202–209 (CYNMKNAC) are CX3CL1-binding. Positions 202 to 209 (CYNMKNAC) are involved in CX3CL1-, NRG1-, FGF1- and IGF1-binding. Residues Asn240, Asp242, Pro244, Glu245, and Asp276 each coordinate Ca(2+). Glu245 contributes to the Mg(2+) binding site. The tract at residues 292–312 (LPNDGHCHIGTDNHYSASTTM) is CX3CL1-binding. 2 N-linked (GlcNAc...) asparagine glycosylation sites follow: Asn345 and Asn396. I-EGF domains are found at residues 462 to 497 (CQAFAQPSSPRCNNGNGTFECGVCRCDQGWLGSMCE), 498 to 547 (CSEE…KYCE), 548 to 584 (CDDFSCVRYKGEMCSGHGQCNCGDCVCDSDWTGYYCN), and 585 to 624 (CTTRTDTCMSTNGLLCSGRGNCECGSCVCVQPGSYGDTCE). Asn477 carries an N-linked (GlcNAc...) asparagine glycan. Asn584 is a glycosylation site (N-linked (GlcNAc...) asparagine). Intrachain disulfides connect Cys585–Cys608, Cys592–Cys606, Cys600–Cys611, Cys613–Cys623, Cys626–Cys629, Cys633–Cys680, Cys639–Cys660, Cys642–Cys656, and Cys688–Cys712. Asn679 carries an N-linked (GlcNAc...) asparagine glycan. The helical transmembrane segment at 718–740 (ILVVLLSVMGAILLIGLATLLIW) threads the bilayer. The Cytoplasmic segment spans residues 741–787 (KLLITIHDRKEFAKFEEERARAKWDTANNPLYKEATSTFTNITYRGT). Thr766 carries the phosphothreonine modification. The residue at position 772 (Tyr772) is a Phosphotyrosine. Positions 776-782 (TSTFTNI) match the LIR motif. Residue Thr778 is modified to Phosphothreonine. A Phosphotyrosine modification is found at Tyr784.

This sequence belongs to the integrin beta chain family. Heterodimer of an alpha and a beta subunit. Beta-3 (ITGB3) associates with either alpha-IIB (ITGA2B) or alpha-V (ITGAV). Interacts with FLNB and COMP. Interacts with PDIA6 following platelet stimulation. Interacts with SYK; upon activation by ITGB3 promotes platelet adhesion. Interacts with MYO10. Interacts with DAB2. Interacts with FERMT2. Integrin ITGAV:ITGB3 interacts with FBLN5 (via N-terminus). Interacts with EMP2; regulates the levels of the heterodimer ITGA5:ITGB3 integrin expression on the plasma membrane. ITGAV:ITGB3 interacts with CCN3. ITGAV:ITGB3 and ITGA2B:ITGB3 interact with SELP (via C-type lectin domain); the interaction mediates cell-cell interaction and adhesion. ITGAV:ITGB3 interacts with AGRA2. ITGAV:ITGB3 is found in a ternary complex with CX3CR1 and CX3CL1. ITGAV:ITGB3 is found in a ternary complex with NRG1 and ERBB3. ITGAV:ITGB3 is found in a ternary complex with FGF1 and FGFR1. ITGAV:ITGB3 interacts with FGF2; it is likely that FGF2 can simultaneously bind ITGAV:ITGB3 and FGF receptors. ITGAV:ITGB3 binds to IL1B. ITGAV:ITGB3 is found in a ternary complex with IGF1 and IGF1R. ITGAV:ITGB3 interacts with IGF2. ITGAV:ITGB3 interacts with FBN1. ITGAV:ITGB3 interacts with CD9, CD81 and CD151 (via second extracellular domain). Interacts (via the allosteric site (site 2)) with CXCL12 in a CXCR4-independent manner. Interacts with MXRA8/DICAM; the interaction inhibits ITGAV:ITGB3 heterodimer formation. ITGAV:ITGB3 interacts with PTN. Forms a complex with PTPRZ1 and PTN that stimulates endothelial cell migration through ITGB3 Tyr-772 phosphorylation. ITGAV:ITGB3 interacts with SLC6A4. Interacts with SLC6A4 (via C-terminus); this interaction regulates SLC6A4 trafficking. ITGA2B:ITGB3 interacts with PPIA/CYPA; the interaction is ROS and PPIase activity-dependent and is increased in the presence of thrombin. Interacts with tensin TNS3; TNS3 also interacts with PEAK1, thus acting as an adapter molecule to bridge the association of PEAK1 with ITGB3. Interacts with TM4SF19. Post-translationally, phosphorylated on tyrosine residues in response to thrombin-induced platelet aggregation. Probably involved in outside-in signaling.

It localises to the cell membrane. Its subcellular location is the cell projection. The protein resides in the lamellipodium membrane. It is found in the cell junction. The protein localises to the focal adhesion. It localises to the postsynaptic cell membrane. Its subcellular location is the synapse. Integrin alpha-V/beta-3 (ITGAV:ITGB3) is a receptor for cytotactin, fibronectin, laminin, matrix metalloproteinase-2, osteopontin, osteomodulin, prothrombin, thrombospondin, vitronectin and von Willebrand factor. Integrin alpha-IIB/beta-3 (ITGA2B:ITGB3) is a receptor for fibronectin, fibrinogen, plasminogen, prothrombin, thrombospondin and vitronectin. Integrins alpha-IIB/beta-3 and alpha-V/beta-3 recognize the sequence R-G-D in a wide array of ligands. Integrin alpha-IIB/beta-3 recognizes the sequence H-H-L-G-G-G-A-K-Q-A-G-D-V in fibrinogen gamma chain. Following activation integrin alpha-IIB/beta-3 brings about platelet/platelet interaction through binding of soluble fibrinogen. This step leads to rapid platelet aggregation which physically plugs ruptured endothelial surfaces. Fibrinogen binding enhances SELP expression in activated platelets. ITGAV:ITGB3 binds to fractalkine (CX3CL1) and acts as its coreceptor in CX3CR1-dependent fractalkine signaling. ITGAV:ITGB3 binds to NRG1 (via EGF domain) and this binding is essential for NRG1-ERBB signaling. ITGAV:ITGB3 binds to FGF1 and this binding is essential for FGF1 signaling. ITGAV:ITGB3 binds to FGF2 and this binding is essential for FGF2 signaling. ITGAV:ITGB3 binds to IGF1 and this binding is essential for IGF1 signaling. ITGAV:ITGB3 binds to IGF2 and this binding is essential for IGF2 signaling. ITGAV:ITGB3 binds to IL1B and this binding is essential for IL1B signaling. ITGAV:ITGB3 binds to PLA2G2A via a site (site 2) which is distinct from the classical ligand-binding site (site 1) and this induces integrin conformational changes and enhanced ligand binding to site 1. ITGAV:ITGB3 acts as a receptor for fibrillin-1 (FBN1) and mediates R-G-D-dependent cell adhesion to FBN1. ITGAV:ITGB3 binds to the Lilrb4a/Gp49b receptor and enhances the Lilrb4a-mediated inhibition of mast cell activation. ITGAV:ITGB3 also suppresses marginal zone B cell antibody production through its interaction with Lilrb4a. In brain, plays a role in synaptic transmission and plasticity. Involved in the regulation of the serotonin neurotransmission, is required to localize to specific compartments within the synapse the serotonin receptor SLC6A4 and for an appropriate reuptake of serotonin. Controls excitatory synaptic strength by regulating GRIA2-containing AMPAR endocytosis, which affects AMPAR abundance and composition. ITGAV:ITGB3 act as a receptor for CD40LG. ITGAV:ITGB3 acts as a receptor for IBSP and promotes cell adhesion and migration to IBSP. The chain is Integrin beta-3 from Mus musculus (Mouse).